Reading from the N-terminus, the 377-residue chain is Exopolygalacturonase (377 aa).

The signal sequence occupies residues 1 to 5 (RGVQS). PbH1 repeat units lie at residues 159-184 (CEDI…IHVG), 186-207 (SKGV…SIGP), 209-229 (SQNV…SIGS), 239-260 (VRGI…RVKT), and 269-290 (ATDL…ILDQ). The active-site Proton donor is the D200. N211 carries N-linked (GlcNAc...) asparagine glycosylation. H223 is a catalytic residue. A glycan (N-linked (GlcNAc...) asparagine) is linked at N345.

The protein belongs to the glycosyl hydrolase 28 family. As to quaternary structure, monomer. In terms of processing, glycosylated. Expressed in pollen (at protein level). Expressed in stem, but not in leaves (at protein level).

The protein localises to the secreted. It localises to the cell wall. It is found in the golgi apparatus. Its subcellular location is the endoplasmic reticulum. The protein resides in the vesicle. The enzyme catalyses [(1-&gt;4)-alpha-D-galacturonosyl](n) + H2O = alpha-D-galacturonate + [(1-&gt;4)-alpha-D-galacturonosyl](n-1). May function in depolymerizing pectin during pollen development, germination, and tube growth. Acts as an exo-polygalacturonase. This chain is Exopolygalacturonase, found in Platanus acerifolia (London plane tree).